The chain runs to 385 residues: 8-amino-7-oxononanoate synthase (385 aa).

Residue arginine 21 coordinates substrate. Residue 108–109 (GF) coordinates pyridoxal 5'-phosphate. Histidine 133 is a binding site for substrate. Pyridoxal 5'-phosphate contacts are provided by serine 179, histidine 207, and threonine 233. Lysine 236 carries the post-translational modification N6-(pyridoxal phosphate)lysine. Threonine 352 is a substrate binding site.

Belongs to the class-II pyridoxal-phosphate-dependent aminotransferase family. BioF subfamily. In terms of assembly, homodimer. The cofactor is pyridoxal 5'-phosphate.

It catalyses the reaction 6-carboxyhexanoyl-[ACP] + L-alanine + H(+) = (8S)-8-amino-7-oxononanoate + holo-[ACP] + CO2. The protein operates within cofactor biosynthesis; biotin biosynthesis. Functionally, catalyzes the decarboxylative condensation of pimeloyl-[acyl-carrier protein] and L-alanine to produce 8-amino-7-oxononanoate (AON), [acyl-carrier protein], and carbon dioxide. This Salmonella newport (strain SL254) protein is 8-amino-7-oxononanoate synthase.